A 75-amino-acid polypeptide reads, in one-letter code: uncharacterized protein (75 aa).

Residues 1–25 (MSLFYRAVALGTLSALVWYSTSILA) form the signal peptide. The helical transmembrane segment at 55 to 75 (YRALLAFSLVICGTLLVTCVI) threads the bilayer.

Its subcellular location is the host endoplasmic reticulum membrane. Functionally, plays a role in the down-regulation of the host NKG2D ligand MICA by targeting ER-resident MICA to proteasomal degradation prior to the GPI-anchoring step. In turn, MICA reduction diminishes NK-cell killing of HCMV-infected cells. This is an uncharacterized protein from Homo sapiens (Human).